We begin with the raw amino-acid sequence, 736 residues long: Na(+)/H(+) antiporter NhaA (736 aa).

Positions 1 to 387 (MNHSPQSARP…ICGYLLLRAA (387 aa)) are na(+)/H(+) antiporter NhaA. 12 consecutive transmembrane segments (helical) span residues 23–43 (AGGI…NSPF), 58–78 (LSLA…LVGL), 96–116 (MLPG…FAVL), 126–146 (GWAV…SLLG), 155–175 (VFLA…IAIF), 178–198 (AEIS…LFVM), 201–221 (MGVV…FFVF), 224–244 (GVHA…KPAP), 265–285 (VAFI…FKGL), 298–318 (ILLG…WLAI), 334–354 (LYGV…IGLL), and 367–387 (IGVL…LRAA). The segment at 388–736 (RPDQSAANPL…EKAIWARYGL (349 aa)) is peptidase S49.

In the N-terminal section; belongs to the NhaA Na(+)/H(+) (TC 2.A.33) antiporter family. The protein in the C-terminal section; belongs to the peptidase S49 family.

Its subcellular location is the cell inner membrane. It carries out the reaction Na(+)(in) + 2 H(+)(out) = Na(+)(out) + 2 H(+)(in). Its function is as follows. Na(+)/H(+) antiporter that extrudes sodium in exchange for external protons. This is Na(+)/H(+) antiporter NhaA from Brucella abortus (strain 2308).